Reading from the N-terminus, the 531-residue chain is Tryptophan 6-halogenase ThaL (531 aa).

G13, T15, A16, A39, I42, I45, V47, and A50 together coordinate FAD. The active site involves K79. P111 contributes to the L-tryptophan binding site. 2 residues coordinate FAD: M198 and L349. Positions 360 and 361 each coordinate chloride. I362 provides a ligand contact to FAD. Residues Y454, Y455, E461, and F465 each contribute to the L-tryptophan site.

The protein belongs to the flavin-dependent halogenase family. Bacterial tryptophan halogenase subfamily. In terms of assembly, homodimer. Monomer in solution.

The enzyme catalyses L-tryptophan + FADH2 + chloride + O2 = 6-chloro-L-tryptophan + FAD + 2 H2O. It catalyses the reaction D-tryptophan + FADH2 + chloride + O2 = 6-chloro-D-tryptophan + FAD + 2 H2O. Its function is as follows. Involved in the biosynthesis of thienodolin, a plant growth-regulating compound. Catalyzes the chlorination of tryptophan (Trp) at C6 position to yield 6-chloro-tryptophan. It is also able to use bromide ions to generate monobrominated Trp. In vitro, accepts a wide range of amides and peptides carrying either L- or D-Trp at the N-terminus. In Streptomyces albogriseolus, this protein is Tryptophan 6-halogenase ThaL.